We begin with the raw amino-acid sequence, 45 residues long: Photosystem II reaction center protein K (45 aa).

The propeptide occupies 1–8 (MTQIFLIG). The helical transmembrane segment at 20-40 (IVDVLPIIPVLFLLLAFVWQA) threads the bilayer.

It belongs to the PsbK family. PSII is composed of 1 copy each of membrane proteins PsbA, PsbB, PsbC, PsbD, PsbE, PsbF, PsbH, PsbI, PsbJ, PsbK, PsbL, PsbM, PsbT, PsbX, PsbY, PsbZ, Psb30/Ycf12, at least 3 peripheral proteins of the oxygen-evolving complex and a large number of cofactors. It forms dimeric complexes.

It localises to the plastid. Its subcellular location is the chloroplast thylakoid membrane. In terms of biological role, one of the components of the core complex of photosystem II (PSII). PSII is a light-driven water:plastoquinone oxidoreductase that uses light energy to abstract electrons from H(2)O, generating O(2) and a proton gradient subsequently used for ATP formation. It consists of a core antenna complex that captures photons, and an electron transfer chain that converts photonic excitation into a charge separation. In Ostreococcus tauri, this protein is Photosystem II reaction center protein K.